The primary structure comprises 278 residues: Large ribosomal subunit protein uL2 (278 aa).

Residues 223–278 (GVAMNPIDHPHGGGEGRTSGGRHPVTPWGFPTKGKKTRSNKRTDTFIVSSRHNRKK) are disordered.

It belongs to the universal ribosomal protein uL2 family. As to quaternary structure, part of the 50S ribosomal subunit. Forms a bridge to the 30S subunit in the 70S ribosome.

In terms of biological role, one of the primary rRNA binding proteins. Required for association of the 30S and 50S subunits to form the 70S ribosome, for tRNA binding and peptide bond formation. It has been suggested to have peptidyltransferase activity; this is somewhat controversial. Makes several contacts with the 16S rRNA in the 70S ribosome. The polypeptide is Large ribosomal subunit protein uL2 (Methylobacterium sp. (strain 4-46)).